The following is a 493-amino-acid chain: Cyclin-dependent kinase-like 2 (493 aa).

A Protein kinase domain is found at 4 to 287; that stretch reads YENLGLVGEG…CAELLHHDFF (284 aa). ATP contacts are provided by residues 10–18 and K33; that span reads VGEGSYGMV. A [NKR]KIAxRE motif is present at residues 45–51; sequence KKIAMRE. The active-site Proton acceptor is the D126. Residues 363 to 384 are disordered; it reads GEKAEKGNRASNASCLHDSRTS.

It belongs to the protein kinase superfamily. CMGC Ser/Thr protein kinase family. CDC2/CDKX subfamily. In terms of tissue distribution, expressed in testis and kidney, and at lower level in brain and lung.

It is found in the cytoplasm. The protein resides in the nucleus. The enzyme catalyses L-seryl-[protein] + ATP = O-phospho-L-seryl-[protein] + ADP + H(+). It carries out the reaction L-threonyl-[protein] + ATP = O-phospho-L-threonyl-[protein] + ADP + H(+). The chain is Cyclin-dependent kinase-like 2 from Homo sapiens (Human).